A 381-amino-acid chain; its full sequence is Alkanesulfonate monooxygenase (381 aa).

The protein belongs to the SsuD family. As to quaternary structure, homotetramer.

It catalyses the reaction an alkanesulfonate + FMNH2 + O2 = an aldehyde + FMN + sulfite + H2O + 2 H(+). Catalyzes the desulfonation of aliphatic sulfonates. The polypeptide is Alkanesulfonate monooxygenase (Citrobacter koseri (strain ATCC BAA-895 / CDC 4225-83 / SGSC4696)).